Reading from the N-terminus, the 128-residue chain is Cytochrome c' (128 aa).

Heme c contacts are provided by Gln13, Gln17, Glu69, Thr70, Cys118, Cys121, and His122.

As to quaternary structure, homodimer. Binds 1 heme c group covalently per subunit.

Functionally, cytochrome c' is the most widely occurring bacterial c-type cytochrome. Cytochromes c' are high-spin proteins and the heme has no sixth ligand. Their exact function is not known. The protein is Cytochrome c' of Magnetospirillum molischianum (Rhodospirillum molischianum).